Reading from the N-terminus, the 1888-residue chain is Fatty acid synthase subunit alpha (1888 aa).

The interval 98–118 (DLAPVEEPNAEEQTGAAATPA) is disordered. The Carrier domain maps to 146-221 (VKASLLLHVL…ETFQDTFAGS (76 aa)). O-(pantetheine 4'-phosphoryl)serine is present on serine 181. A beta-ketoacyl reductase region spans residues 675 to 874 (DKYVLITGAG…CGAIIGWTRG (200 aa)). In terms of domain architecture, Ketosynthase family 3 (KS3) spans 1119 to 1657 (KQMIQEVVIE…QKGAQAVAVH (539 aa)). Catalysis depends on for beta-ketoacyl synthase activity residues cysteine 1305, histidine 1542, and histidine 1583. Residues aspartate 1774, valine 1775, and glutamate 1776 each coordinate Mg(2+). Acetyl-CoA is bound by residues 1774-1776 (DVE), tyrosine 1800, serine 1810, 1819-1829 (EAVFKSLGVKS), 1843-1846 (REAG), and 1873-1875 (ISH). Residues serine 1874 and histidine 1875 each coordinate Mg(2+).

The protein belongs to the thiolase-like superfamily. Fungal fatty acid synthetase subunit alpha family. In terms of assembly, fatty acid synthase is composed of alpha and beta subunits.

It catalyses the reaction acetyl-CoA + n malonyl-CoA + 2n NADPH + 4n H(+) = a long-chain-acyl-CoA + n CoA + n CO2 + 2n NADP(+).. The catalysed reaction is a fatty acyl-[ACP] + malonyl-[ACP] + H(+) = a 3-oxoacyl-[ACP] + holo-[ACP] + CO2. The enzyme catalyses a (3R)-hydroxyacyl-[ACP] + NADP(+) = a 3-oxoacyl-[ACP] + NADPH + H(+). Fatty acid synthetase catalyzes the formation of long-chain fatty acids from acetyl-CoA, malonyl-CoA and NADPH. The alpha subunit contains domains for: acyl carrier protein, 3-oxoacyl-[acyl-carrier-protein] reductase, and 3-oxoacyl-[acyl-carrier-protein] synthase. In this species, higher amounts of C18 than C16 fatty acids are produced. In Lachancea kluyveri (Yeast), this protein is Fatty acid synthase subunit alpha (FAS2).